A 384-amino-acid chain; its full sequence is BTB and MATH domain-containing protein 34 (384 aa).

Residues Leu41–Lys127 are a coiled coil. In terms of domain architecture, MATH spans Glu167 to Ile277. Positions Ser317–Arg380 constitute a BTB domain.

The chain is BTB and MATH domain-containing protein 34 (bath-34) from Caenorhabditis elegans.